The chain runs to 435 residues: Putative pyridoxal-phosphate dependent protein F13B12.4 (435 aa).

Positions 1–18 are cleaved as a signal peptide; the sequence is MKLLLLALFLSISASCLA. Asn79 carries N-linked (GlcNAc...) asparagine glycosylation. Lys89 is subject to N6-(pyridoxal phosphate)lysine. Residue 235–239 coordinates pyridoxal 5'-phosphate; it reads GTGGT. Asn277 carries N-linked (GlcNAc...) asparagine glycosylation. Residue Ser342 participates in pyridoxal 5'-phosphate binding.

It belongs to the cysteine synthase/cystathionine beta-synthase family. Highly divergent.

This Caenorhabditis elegans protein is Putative pyridoxal-phosphate dependent protein F13B12.4.